The chain runs to 274 residues: Putative hydro-lyase SAV_6940 (274 aa).

This sequence belongs to the D-glutamate cyclase family.

The polypeptide is Putative hydro-lyase SAV_6940 (Streptomyces avermitilis (strain ATCC 31267 / DSM 46492 / JCM 5070 / NBRC 14893 / NCIMB 12804 / NRRL 8165 / MA-4680)).